Consider the following 729-residue polypeptide: Fatty acid oxidation complex subunit alpha (729 aa).

Residues 1–189 (MLYQSETLQL…KVGLVDAVVA (189 aa)) form an enoyl-CoA hydratase/isomerase region. Asp-296 serves as a coordination point for substrate. The interval 311-729 (SAPKQAAVLG…LLDVSISQPA (419 aa)) is 3-hydroxyacyl-CoA dehydrogenase. Residues Met-324, Asp-343, 400 to 402 (VVE), Lys-407, and Ser-429 each bind NAD(+). His-450 (for 3-hydroxyacyl-CoA dehydrogenase activity) is an active-site residue. Asn-453 lines the NAD(+) pocket. The substrate site is built by Asn-500 and Tyr-660.

This sequence in the N-terminal section; belongs to the enoyl-CoA hydratase/isomerase family. The protein in the C-terminal section; belongs to the 3-hydroxyacyl-CoA dehydrogenase family. Heterotetramer of two alpha chains (FadB) and two beta chains (FadA).

It carries out the reaction a (3S)-3-hydroxyacyl-CoA + NAD(+) = a 3-oxoacyl-CoA + NADH + H(+). The enzyme catalyses a (3S)-3-hydroxyacyl-CoA = a (2E)-enoyl-CoA + H2O. The catalysed reaction is a 4-saturated-(3S)-3-hydroxyacyl-CoA = a (3E)-enoyl-CoA + H2O. It catalyses the reaction (3S)-3-hydroxybutanoyl-CoA = (3R)-3-hydroxybutanoyl-CoA. It carries out the reaction a (3Z)-enoyl-CoA = a 4-saturated (2E)-enoyl-CoA. The enzyme catalyses a (3E)-enoyl-CoA = a 4-saturated (2E)-enoyl-CoA. The protein operates within lipid metabolism; fatty acid beta-oxidation. Functionally, involved in the aerobic and anaerobic degradation of long-chain fatty acids via beta-oxidation cycle. Catalyzes the formation of 3-oxoacyl-CoA from enoyl-CoA via L-3-hydroxyacyl-CoA. It can also use D-3-hydroxyacyl-CoA and cis-3-enoyl-CoA as substrate. This is Fatty acid oxidation complex subunit alpha from Yersinia enterocolitica serotype O:8 / biotype 1B (strain NCTC 13174 / 8081).